We begin with the raw amino-acid sequence, 235 residues long: Endonuclease V (235 aa).

Mg(2+) is bound by residues aspartate 45 and aspartate 115.

Belongs to the endonuclease V family. The cofactor is Mg(2+).

The protein localises to the cytoplasm. It catalyses the reaction Endonucleolytic cleavage at apurinic or apyrimidinic sites to products with a 5'-phosphate.. Functionally, DNA repair enzyme involved in the repair of deaminated bases. Selectively cleaves double-stranded DNA at the second phosphodiester bond 3' to a deoxyinosine leaving behind the intact lesion on the nicked DNA. The sequence is that of Endonuclease V from Bacillus thuringiensis subsp. konkukian (strain 97-27).